The chain runs to 101 residues: NAD(P)H-quinone oxidoreductase subunit 4L, chloroplastic (101 aa).

The next 3 membrane-spanning stretches (helical) occupy residues 2–22, 32–52, and 61–81; these read MLEYALVLSAFLFSIGIYGLI, MCLELILNAVNMNLVTFSYFF, and IFSIFIIAIAAAEAAIGLAIV.

It belongs to the complex I subunit 4L family. NDH is composed of at least 16 different subunits, 5 of which are encoded in the nucleus.

It is found in the plastid. The protein resides in the chloroplast thylakoid membrane. The catalysed reaction is a plastoquinone + NADH + (n+1) H(+)(in) = a plastoquinol + NAD(+) + n H(+)(out). It catalyses the reaction a plastoquinone + NADPH + (n+1) H(+)(in) = a plastoquinol + NADP(+) + n H(+)(out). NDH shuttles electrons from NAD(P)H:plastoquinone, via FMN and iron-sulfur (Fe-S) centers, to quinones in the photosynthetic chain and possibly in a chloroplast respiratory chain. The immediate electron acceptor for the enzyme in this species is believed to be plastoquinone. Couples the redox reaction to proton translocation, and thus conserves the redox energy in a proton gradient. This is NAD(P)H-quinone oxidoreductase subunit 4L, chloroplastic from Ipomoea purpurea (Common morning glory).